The primary structure comprises 237 residues: uncharacterized protein (237 aa).

This is an uncharacterized protein from Methanocaldococcus jannaschii (strain ATCC 43067 / DSM 2661 / JAL-1 / JCM 10045 / NBRC 100440) (Methanococcus jannaschii).